We begin with the raw amino-acid sequence, 200 residues long: Methylthioribulose-1-phosphate dehydratase-like protein (200 aa).

This sequence belongs to the aldolase class II family. MtnB subfamily.

This is Methylthioribulose-1-phosphate dehydratase-like protein from Schizosaccharomyces pombe (strain 972 / ATCC 24843) (Fission yeast).